A 735-amino-acid polypeptide reads, in one-letter code: Translation factor GUF1 homolog, chloroplastic (735 aa).

2 disordered regions span residues M1–S38 and P106–N126. Residues M1–R47 constitute a chloroplast transit peptide. Residues C11 to S38 show a composition bias toward polar residues. Over residues P106–K115 the composition is skewed to basic and acidic residues. Residues S137 to K319 form the tr-type G domain. GTP is bound by residues A146–S153, D212–H216, and N266–D269.

Belongs to the TRAFAC class translation factor GTPase superfamily. Classic translation factor GTPase family. LepA subfamily.

It is found in the plastid. Its subcellular location is the chloroplast. It carries out the reaction GTP + H2O = GDP + phosphate + H(+). Promotes chloroplast protein synthesis. May act as a fidelity factor of the translation reaction, by catalyzing a one-codon backward translocation of tRNAs on improperly translocated ribosomes. The sequence is that of Translation factor GUF1 homolog, chloroplastic from Physcomitrium patens (Spreading-leaved earth moss).